Here is a 201-residue protein sequence, read N- to C-terminus: Small ribosomal subunit protein uS4 (201 aa).

Residues 91–154 (TRLDNVVYRA…RKMEWFEEAQ (64 aa)) enclose the S4 RNA-binding domain.

It belongs to the universal ribosomal protein uS4 family. Part of the 30S ribosomal subunit. Contacts protein S5. The interaction surface between S4 and S5 is involved in control of translational fidelity.

Its function is as follows. One of the primary rRNA binding proteins, it binds directly to 16S rRNA where it nucleates assembly of the body of the 30S subunit. Functionally, with S5 and S12 plays an important role in translational accuracy. This chain is Small ribosomal subunit protein uS4, found in Corynebacterium ammoniagenes (Brevibacterium ammoniagenes).